Reading from the N-terminus, the 100-residue chain is Guanine nucleotide exchange factor MSS4 homolog (100 aa).

One can recognise an MSS4 domain in the interval 1-100 (MSNLRIVCQH…YLLLCSLEKN (100 aa)). C8, C11, C73, and C76 together coordinate Zn(2+).

Belongs to the DSS4/MSS4 family.

In terms of biological role, guanine-nucleotide-releasing protein that acts on members of the sec4/ypt1/rab subfamily. The chain is Guanine nucleotide exchange factor MSS4 homolog from Schizosaccharomyces pombe (strain 972 / ATCC 24843) (Fission yeast).